A 186-amino-acid polypeptide reads, in one-letter code: Adenine phosphoribosyltransferase (186 aa).

The protein belongs to the purine/pyrimidine phosphoribosyltransferase family. Homodimer.

It is found in the cytoplasm. The enzyme catalyses AMP + diphosphate = 5-phospho-alpha-D-ribose 1-diphosphate + adenine. It functions in the pathway purine metabolism; AMP biosynthesis via salvage pathway; AMP from adenine: step 1/1. In terms of biological role, catalyzes a salvage reaction resulting in the formation of AMP, that is energically less costly than de novo synthesis. This is Adenine phosphoribosyltransferase from Xanthomonas axonopodis pv. citri (strain 306).